A 139-amino-acid chain; its full sequence is D-ribose pyranase (139 aa).

His-20 acts as the Proton donor in catalysis. Residues Asp-28, His-106, and 128-130 contribute to the substrate site; that span reads FAN.

The protein belongs to the RbsD / FucU family. RbsD subfamily. In terms of assembly, homodecamer.

It localises to the cytoplasm. It catalyses the reaction beta-D-ribopyranose = beta-D-ribofuranose. It participates in carbohydrate metabolism; D-ribose degradation; D-ribose 5-phosphate from beta-D-ribopyranose: step 1/2. Its function is as follows. Catalyzes the interconversion of beta-pyran and beta-furan forms of D-ribose. This is D-ribose pyranase from Yersinia enterocolitica serotype O:8 / biotype 1B (strain NCTC 13174 / 8081).